The sequence spans 754 residues: Endothelin-converting enzyme 1 (754 aa).

Topologically, residues 1–52 (MMSTYKRATLDEEDLVDSLSEGEVYPNGLQVNFRNFRSSQRCWATRTQVEKR) are cytoplasmic. Thr9 is subject to Phosphothreonine. The chain crosses the membrane as a helical; Signal-anchor for type II membrane protein span at residues 53–73 (LIVLVALLAAGLVACLTALGI). Residues 74–754 (QYRTRTPPVC…MNPRHKCEVW (681 aa)) are Extracellular-facing. The Peptidase M13 domain occupies 82–754 (VCLSEACVSV…MNPRHKCEVW (673 aa)). 5 cysteine pairs are disulfide-bonded: Cys83–Cys88, Cys106–Cys739, Cys114–Cys699, Cys169–Cys419, and Cys628–Cys751. Residues Asn150, Asn171, Asn194, Asn254, Asn300, Asn346, Asn367, and Asn523 are each glycosylated (N-linked (GlcNAc...) asparagine). His591 is a binding site for Zn(2+). Glu592 is an active-site residue. Residue His595 coordinates Zn(2+). N-linked (GlcNAc...) asparagine glycosylation is found at Asn616 and Asn635. Residue Glu651 participates in Zn(2+) binding. Asp655 acts as the Proton donor in catalysis.

The protein belongs to the peptidase M13 family. In terms of assembly, homodimer; disulfide-linked. Interacts with PPP1R16B. Interacts with TSPAN8; this interaction recruits the endothelin converting enzyme ECE1 to tetraspanin-enriched microdomains and positively modulates its enzymatic activity. It depends on Zn(2+) as a cofactor.

Its subcellular location is the cell membrane. The catalysed reaction is Hydrolysis of the 21-Trp-|-Val-22 bond in big endothelin to form endothelin 1.. Its activity is regulated as follows. Inhibited by phosphoramidon. Converts big endothelin-1 to endothelin-1. In Cavia porcellus (Guinea pig), this protein is Endothelin-converting enzyme 1 (ECE1).